Consider the following 375-residue polypeptide: tRNA-specific 2-thiouridylase MnmA (375 aa).

ATP-binding positions include G12–S19 and M38. Positions N98–D100 are interaction with target base in tRNA. The active-site Nucleophile is C103. A disulfide bridge connects residues C103 and C200. G127 contacts ATP. The interval K150–Q152 is interaction with tRNA. The active-site Cysteine persulfide intermediate is C200. Positions R312 to Y313 are interaction with tRNA.

It belongs to the MnmA/TRMU family.

The protein resides in the cytoplasm. The enzyme catalyses S-sulfanyl-L-cysteinyl-[protein] + uridine(34) in tRNA + AH2 + ATP = 2-thiouridine(34) in tRNA + L-cysteinyl-[protein] + A + AMP + diphosphate + H(+). Catalyzes the 2-thiolation of uridine at the wobble position (U34) of tRNA, leading to the formation of s(2)U34. The chain is tRNA-specific 2-thiouridylase MnmA from Levilactobacillus brevis (strain ATCC 367 / BCRC 12310 / CIP 105137 / JCM 1170 / LMG 11437 / NCIMB 947 / NCTC 947) (Lactobacillus brevis).